A 187-amino-acid polypeptide reads, in one-letter code: Benzene 1,2-dioxygenase subunit beta (187 aa).

This sequence belongs to the bacterial ring-hydroxylating dioxygenase beta subunit family. In terms of assembly, this dioxygenase system consists of four proteins: the two subunits of the hydroxylase component (BnzA and BnzB), a ferredoxin (BnzC) and a ferredoxin reductase (BnzD). [2Fe-2S] cluster serves as cofactor. It depends on Fe cation as a cofactor.

The enzyme catalyses benzene + NADH + O2 + H(+) = cis-1,2-dihydrobenzene-1,2-diol + NAD(+). It carries out the reaction toluene + NADH + O2 + H(+) = (1S,2R)-3-methylcyclohexa-3,5-diene-1,2-diol + NAD(+). It functions in the pathway aromatic compound metabolism; benzene degradation; catechol from benzene: step 1/2. The protein operates within xenobiotic degradation; toluene degradation. It participates in xenobiotic degradation; xylene degradation. Catalyzes both the oxidation of benzene and toluene. The beta subunit may be responsible for the substrate specificity of the enzyme. In Pseudomonas putida (strain ATCC 700007 / DSM 6899 / JCM 31910 / BCRC 17059 / LMG 24140 / F1), this protein is Benzene 1,2-dioxygenase subunit beta (bnzB).